A 536-amino-acid chain; its full sequence is Light-independent protochlorophyllide reductase subunit B (536 aa).

Asp36 lines the [4Fe-4S] cluster pocket. Residue Asp274 is the Proton donor of the active site. 409 to 410 (GL) serves as a coordination point for substrate. The interval 426-448 (DEAGPSHHGGKAVPASAPRADEA) is disordered.

Belongs to the ChlB/BchB/BchZ family. Protochlorophyllide reductase is composed of three subunits; BchL, BchN and BchB. Forms a heterotetramer of two BchB and two BchN subunits. Requires [4Fe-4S] cluster as cofactor.

It carries out the reaction chlorophyllide a + oxidized 2[4Fe-4S]-[ferredoxin] + 2 ADP + 2 phosphate = protochlorophyllide a + reduced 2[4Fe-4S]-[ferredoxin] + 2 ATP + 2 H2O. The protein operates within porphyrin-containing compound metabolism; bacteriochlorophyll biosynthesis (light-independent). Its function is as follows. Component of the dark-operative protochlorophyllide reductase (DPOR) that uses Mg-ATP and reduced ferredoxin to reduce ring D of protochlorophyllide (Pchlide) to form chlorophyllide a (Chlide). This reaction is light-independent. The NB-protein (BchN-BchB) is the catalytic component of the complex. This Cereibacter sphaeroides (strain KD131 / KCTC 12085) (Rhodobacter sphaeroides) protein is Light-independent protochlorophyllide reductase subunit B.